The chain runs to 479 residues: Wax ester synthase/diacylglycerol acyltransferase 2 (479 aa).

Residues 1–182 (MAIERQVTEA…VAPKKNKAKN (182 aa)) are Cytoplasmic-facing. His-144 acts as the Proton acceptor in catalysis. The chain crosses the membrane as a helical span at residues 183-199 (VCFSLVAWLWFIVRLMF). The Lumenal segment spans residues 200–479 (HTCVEVIKSI…PKKVFHASKV (280 aa)). Asn-253 carries an N-linked (GlcNAc...) asparagine glycan.

The protein in the N-terminal section; belongs to the long-chain O-acyltransferase family. As to expression, mostly expressed in flowers and siliques and barely in roots and stems.

Its subcellular location is the cell membrane. The protein resides in the endoplasmic reticulum membrane. It catalyses the reaction an acyl-CoA + a 1,2-diacyl-sn-glycerol = a triacyl-sn-glycerol + CoA. The enzyme catalyses a long chain fatty alcohol + a fatty acyl-CoA = a wax ester + CoA. The protein operates within glycerolipid metabolism; triacylglycerol biosynthesis. Its pathway is lipid metabolism. Functionally, bifunctional wax ester synthase/diacylglycerol acyltransferase. Involved in cuticular wax biosynthesis. The chain is Wax ester synthase/diacylglycerol acyltransferase 2 from Arabidopsis thaliana (Mouse-ear cress).